Reading from the N-terminus, the 353-residue chain is Melatonin receptor type 1A (353 aa).

The segment at 1–26 (MRANGSELNGTVLPRDPPAEGSPRRP) is disordered. Over 1–32 (MRANGSELNGTVLPRDPPAEGSPRRPPWVTST) the chain is Extracellular. 2 N-linked (GlcNAc...) asparagine glycosylation sites follow: asparagine 4 and asparagine 9. The chain crosses the membrane as a helical span at residues 33-53 (LATILIFTIVVDLLGNLLVIL). At 54 to 66 (SVYRNKKLRNAGN) the chain is on the cytoplasmic side. A helical transmembrane segment spans residues 67 to 87 (IFVVSLAIADLVVAIYPYPLV). At 88 to 105 (LTSVFHNGWNLGYLHCQI) the chain is on the extracellular side. Cysteine 103 and cysteine 180 are oxidised to a cystine. The chain crosses the membrane as a helical span at residues 106–126 (SGFLMGLSVIGSIFNITGIAI). Over 127–145 (NRYCYICHSLKYDKLYSDK) the chain is Cytoplasmic. The chain crosses the membrane as a helical span at residues 146-166 (NSLCYVGLIWVLTVVAIVPNL). The Extracellular portion of the chain corresponds to 167-190 (FVGSLQYDPRIYSCTFAQSVSSAY). Residues 191 to 211 (TIAVVFFHFILPIAIVTYCYL) traverse the membrane as a helical segment. The Cytoplasmic portion of the chain corresponds to 212-243 (RIWILVIQVRRRVKPDNNPRLKPHDFRNFVTM). A helical membrane pass occupies residues 244–264 (FVVFVLFAVCWAPLNFIGLAV). Residues 265–277 (AVDPETIIPRIPE) are Extracellular-facing. A helical transmembrane segment spans residues 278–298 (WLFVSSYYMAYFNSCLNAIIY). The Cytoplasmic portion of the chain corresponds to 299-353 (GLLNQNFRREYKKIVVSFCTAKAFFQDSSNDAADRIRSKPSPLITNNNQVKVDSV).

It belongs to the G-protein coupled receptor 1 family. Expressed in optic tectum and retina, less in neostriatum, hypothalamus and thalamus.

It is found in the cell membrane. In terms of biological role, high affinity receptor for melatonin. The activity of this receptor is mediated by pertussis toxin sensitive G proteins that inhibits adenylate cyclase activity. In Gallus gallus (Chicken), this protein is Melatonin receptor type 1A.